Here is a 313-residue protein sequence, read N- to C-terminus: Probable 5-dehydro-4-deoxyglucarate dehydratase 1 (313 aa).

The protein belongs to the DapA family.

It carries out the reaction 5-dehydro-4-deoxy-D-glucarate + H(+) = 2,5-dioxopentanoate + CO2 + H2O. Its pathway is carbohydrate acid metabolism; D-glucarate degradation; 2,5-dioxopentanoate from D-glucarate: step 2/2. The sequence is that of Probable 5-dehydro-4-deoxyglucarate dehydratase 1 from Streptomyces avermitilis (strain ATCC 31267 / DSM 46492 / JCM 5070 / NBRC 14893 / NCIMB 12804 / NRRL 8165 / MA-4680).